A 201-amino-acid polypeptide reads, in one-letter code: Large ribosomal subunit protein uL4 (201 aa).

The disordered stretch occupies residues 46-71; that stretch reads QKTRAEITGSGKKPWRQKGTGRARSG.

This sequence belongs to the universal ribosomal protein uL4 family. In terms of assembly, part of the 50S ribosomal subunit.

One of the primary rRNA binding proteins, this protein initially binds near the 5'-end of the 23S rRNA. It is important during the early stages of 50S assembly. It makes multiple contacts with different domains of the 23S rRNA in the assembled 50S subunit and ribosome. Functionally, forms part of the polypeptide exit tunnel. This Klebsiella pneumoniae (strain 342) protein is Large ribosomal subunit protein uL4.